The primary structure comprises 428 residues: Serine--tRNA ligase (428 aa).

235-237 provides a ligand contact to L-serine; that stretch reads TAE. An ATP-binding site is contributed by 266–268; sequence RSE. Glu-289 serves as a coordination point for L-serine. 353–356 is an ATP binding site; it reads EISS. Ser-389 serves as a coordination point for L-serine.

This sequence belongs to the class-II aminoacyl-tRNA synthetase family. Type-1 seryl-tRNA synthetase subfamily. Homodimer. The tRNA molecule binds across the dimer.

Its subcellular location is the cytoplasm. It catalyses the reaction tRNA(Ser) + L-serine + ATP = L-seryl-tRNA(Ser) + AMP + diphosphate + H(+). The enzyme catalyses tRNA(Sec) + L-serine + ATP = L-seryl-tRNA(Sec) + AMP + diphosphate + H(+). It participates in aminoacyl-tRNA biosynthesis; selenocysteinyl-tRNA(Sec) biosynthesis; L-seryl-tRNA(Sec) from L-serine and tRNA(Sec): step 1/1. Its function is as follows. Catalyzes the attachment of serine to tRNA(Ser). Is also able to aminoacylate tRNA(Sec) with serine, to form the misacylated tRNA L-seryl-tRNA(Sec), which will be further converted into selenocysteinyl-tRNA(Sec). This Shewanella oneidensis (strain ATCC 700550 / JCM 31522 / CIP 106686 / LMG 19005 / NCIMB 14063 / MR-1) protein is Serine--tRNA ligase.